Here is a 205-residue protein sequence, read N- to C-terminus: Small ribosomal subunit protein uS4 (205 aa).

Residues 26-46 form a disordered region; sequence PVNRREYGPGQHGQRRKQKPS. The S4 RNA-binding domain occupies 94–157; it reads RRLDAVVYRL…KQLAIVLDAV (64 aa).

Belongs to the universal ribosomal protein uS4 family. As to quaternary structure, part of the 30S ribosomal subunit. Contacts protein S5. The interaction surface between S4 and S5 is involved in control of translational fidelity.

Its function is as follows. One of the primary rRNA binding proteins, it binds directly to 16S rRNA where it nucleates assembly of the body of the 30S subunit. With S5 and S12 plays an important role in translational accuracy. The protein is Small ribosomal subunit protein uS4 of Gluconobacter oxydans (strain 621H) (Gluconobacter suboxydans).